We begin with the raw amino-acid sequence, 375 residues long: Thiamine-phosphate synthase (375 aa).

The interval 1-127 (MTNAESRTVL…AACIESIRYQ (127 aa)) is unknown. Positions 128 to 375 (CYATFRELEL…SSDVCPLPND (248 aa)) are thiamine-phosphate synthase. 4-amino-2-methyl-5-(diphosphooxymethyl)pyrimidine is bound by residues 183–185 (QLR) and Asn215. 2 residues coordinate Mg(2+): Asp216 and Glu235. Positions 254 and 283 each coordinate 4-amino-2-methyl-5-(diphosphooxymethyl)pyrimidine. Gly315 lines the 2-[(2R,5Z)-2-carboxy-4-methylthiazol-5(2H)-ylidene]ethyl phosphate pocket.

Belongs to the thiamine-phosphate synthase family. It depends on Mg(2+) as a cofactor.

It catalyses the reaction 2-[(2R,5Z)-2-carboxy-4-methylthiazol-5(2H)-ylidene]ethyl phosphate + 4-amino-2-methyl-5-(diphosphooxymethyl)pyrimidine + 2 H(+) = thiamine phosphate + CO2 + diphosphate. The catalysed reaction is 2-(2-carboxy-4-methylthiazol-5-yl)ethyl phosphate + 4-amino-2-methyl-5-(diphosphooxymethyl)pyrimidine + 2 H(+) = thiamine phosphate + CO2 + diphosphate. It carries out the reaction 4-methyl-5-(2-phosphooxyethyl)-thiazole + 4-amino-2-methyl-5-(diphosphooxymethyl)pyrimidine + H(+) = thiamine phosphate + diphosphate. Its pathway is cofactor biosynthesis; thiamine diphosphate biosynthesis; thiamine phosphate from 4-amino-2-methyl-5-diphosphomethylpyrimidine and 4-methyl-5-(2-phosphoethyl)-thiazole: step 1/1. Its function is as follows. Condenses 4-methyl-5-(beta-hydroxyethyl)thiazole monophosphate (THZ-P) and 2-methyl-4-amino-5-hydroxymethyl pyrimidine pyrophosphate (HMP-PP) to form thiamine monophosphate (TMP). The protein is Thiamine-phosphate synthase (thiE) of Rhodopirellula baltica (strain DSM 10527 / NCIMB 13988 / SH1).